Consider the following 351-residue polypeptide: MTIAVGRAPSRGWFDVLDDWLKRDRFVFVGWSGILLFPCAFLALGGWLTGTTFVTSWYTHGLASSYLEGANFLTVAVSSPADSMGHSLLLLWGPEAQGDLTRWFQLGGLWPFVALHGAFGLIGFMLRQFEIARLVGIRPYNALAFSAPIAVFVSVFLMYPLGQSSWFFAPSFGVAAIFRFLLFLQGFHNWTLNPFHMMGVAGVLGGALLCAIHGATVENTLFEDGEGANTFRAFNPTQSEETYSMVTANRFWSQIFGIAFSNKRWLHFFMLFVPVTGLWMSAVGIVGLALNLRAYDFVSQELRAAEDPEFETFYTKNILLNEGIRAWMAPQDQPHEKFVFPEEVLPRGNAL.

A helical membrane pass occupies residues 39–59; it reads CAFLALGGWLTGTTFVTSWYT. His-116 contributes to the chlorophyll a binding site. The helical transmembrane segment at 123-139 threads the bilayer; the sequence is GFMLRQFEIARLVGIRP. Residues Gln-128 and Asn-141 each coordinate pheophytin a. Residues 151–164 form a helical membrane-spanning segment; sequence VFVSVFLMYPLGQS. His-196 contacts chlorophyll a. The helical transmembrane segment at 206–226 threads the bilayer; the sequence is GALLCAIHGATVENTLFEDGE. His-213 and Phe-260 together coordinate a plastoquinone. His-213 contacts Fe cation. His-267 provides a ligand contact to Fe cation. Residues 277–293 form a helical membrane-spanning segment; sequence GLWMSAVGIVGLALNLR.

This sequence belongs to the reaction center PufL/M/PsbA/D family. As to quaternary structure, PSII is composed of 1 copy each of membrane proteins PsbA, PsbB, PsbC, PsbD, PsbE, PsbF, PsbH, PsbI, PsbJ, PsbK, PsbL, PsbM, PsbT, PsbX, PsbY, PsbZ, Psb30/Ycf12, peripheral proteins PsbO, CyanoQ (PsbQ), PsbU, PsbV and a large number of cofactors. It forms dimeric complexes. The D1/D2 heterodimer binds P680, chlorophylls that are the primary electron donor of PSII, and subsequent electron acceptors. It shares a non-heme iron and each subunit binds pheophytin, quinone, additional chlorophylls, carotenoids and lipids. There is also a Cl(-1) ion associated with D1 and D2, which is required for oxygen evolution. The PSII complex binds additional chlorophylls, carotenoids and specific lipids. serves as cofactor.

The protein resides in the cellular thylakoid membrane. The enzyme catalyses 2 a plastoquinone + 4 hnu + 2 H2O = 2 a plastoquinol + O2. Its function is as follows. Photosystem II (PSII) is a light-driven water:plastoquinone oxidoreductase that uses light energy to abstract electrons from H(2)O, generating O(2) and a proton gradient subsequently used for ATP formation. It consists of a core antenna complex that captures photons, and an electron transfer chain that converts photonic excitation into a charge separation. The D1/D2 (PsbA/PsbD) reaction center heterodimer binds P680, the primary electron donor of PSII as well as several subsequent electron acceptors. D2 is needed for assembly of a stable PSII complex. The polypeptide is Photosystem II D2 protein (Nostoc sp. (strain PCC 7120 / SAG 25.82 / UTEX 2576)).